Reading from the N-terminus, the 233-residue chain is Pirin-like protein YhaK (233 aa).

The protein belongs to the pirin family. In terms of assembly, monomer.

The protein resides in the cytoplasm. Functionally, does not have quercetin 2,3-dioxygenase activity. This Escherichia coli (strain K12) protein is Pirin-like protein YhaK (yhaK).